The following is a 453-amino-acid chain: Aspartate aminotransferase, chloroplastic (453 aa).

A chloroplast-targeting transit peptide spans 1 to 44 (MASLMLSLGSTSLLPREINKDKLKLGTSASNPFLKAKSFSRVTM). L-aspartate is bound by residues Gly85, Trp181, and Asn234. Position 298 is an N6-(pyridoxal phosphate)lysine (Lys298). Residue Arg427 coordinates L-aspartate.

Belongs to the class-I pyridoxal-phosphate-dependent aminotransferase family. As to quaternary structure, homodimer. Requires pyridoxal 5'-phosphate as cofactor.

The protein localises to the plastid. It localises to the chloroplast. Its subcellular location is the amyloplast. The enzyme catalyses L-aspartate + 2-oxoglutarate = oxaloacetate + L-glutamate. Amino acid aminotransferase important for the metabolism of amino acids and Krebs-cycle related organic acids. No activity with D-Asp or D-Ala as amino donors. In plants, it is involved in nitrogen metabolism and in aspects of carbon and energy metabolism. The sequence is that of Aspartate aminotransferase, chloroplastic (ASP5) from Arabidopsis thaliana (Mouse-ear cress).